Here is a 260-residue protein sequence, read N- to C-terminus: Shikimate dehydrogenase (NADP(+)) (260 aa).

Residues 14–16 (SAS) and threonine 60 each bind shikimate. Lysine 64 functions as the Proton acceptor in the catalytic mechanism. 2 residues coordinate shikimate: asparagine 85 and aspartate 100. Residues 121–125 (GAGGA), 145–150 (NRTYER), and phenylalanine 201 contribute to the NADP(+) site. Residue tyrosine 203 coordinates shikimate. Glycine 225 lines the NADP(+) pocket.

It belongs to the shikimate dehydrogenase family. In terms of assembly, homodimer.

It carries out the reaction shikimate + NADP(+) = 3-dehydroshikimate + NADPH + H(+). It functions in the pathway metabolic intermediate biosynthesis; chorismate biosynthesis; chorismate from D-erythrose 4-phosphate and phosphoenolpyruvate: step 4/7. Involved in the biosynthesis of the chorismate, which leads to the biosynthesis of aromatic amino acids. Catalyzes the reversible NADPH linked reduction of 3-dehydroshikimate (DHSA) to yield shikimate (SA). In Pyrobaculum neutrophilum (strain DSM 2338 / JCM 9278 / NBRC 100436 / V24Sta) (Thermoproteus neutrophilus), this protein is Shikimate dehydrogenase (NADP(+)).